The sequence spans 128 residues: NADH-quinone oxidoreductase subunit A (128 aa).

A run of 3 helical transmembrane segments spans residues 9–29 (FPIA…LALA), 68–88 (LLFI…VLLL), and 96–116 (LGWA…AGLV).

The protein belongs to the complex I subunit 3 family. In terms of assembly, NDH-1 is composed of 14 different subunits. Subunits NuoA, H, J, K, L, M, N constitute the membrane sector of the complex.

The protein localises to the cell inner membrane. It catalyses the reaction a quinone + NADH + 5 H(+)(in) = a quinol + NAD(+) + 4 H(+)(out). Functionally, NDH-1 shuttles electrons from NADH, via FMN and iron-sulfur (Fe-S) centers, to quinones in the respiratory chain. The immediate electron acceptor for the enzyme in this species is believed to be ubiquinone. Couples the redox reaction to proton translocation (for every two electrons transferred, four hydrogen ions are translocated across the cytoplasmic membrane), and thus conserves the redox energy in a proton gradient. The protein is NADH-quinone oxidoreductase subunit A of Anaeromyxobacter sp. (strain Fw109-5).